The following is a 166-amino-acid chain: NAD(P)H-quinone oxidoreductase subunit I, chloroplastic (166 aa).

4Fe-4S ferredoxin-type domains lie at 55-84 and 95-124; these read GRIH…VDWK and LNYS…MTEE. 8 residues coordinate [4Fe-4S] cluster: Cys64, Cys67, Cys70, Cys74, Cys104, Cys107, Cys110, and Cys114.

This sequence belongs to the complex I 23 kDa subunit family. NDH is composed of at least 16 different subunits, 5 of which are encoded in the nucleus. It depends on [4Fe-4S] cluster as a cofactor.

It is found in the plastid. The protein resides in the chloroplast thylakoid membrane. The enzyme catalyses a plastoquinone + NADH + (n+1) H(+)(in) = a plastoquinol + NAD(+) + n H(+)(out). The catalysed reaction is a plastoquinone + NADPH + (n+1) H(+)(in) = a plastoquinol + NADP(+) + n H(+)(out). In terms of biological role, NDH shuttles electrons from NAD(P)H:plastoquinone, via FMN and iron-sulfur (Fe-S) centers, to quinones in the photosynthetic chain and possibly in a chloroplast respiratory chain. The immediate electron acceptor for the enzyme in this species is believed to be plastoquinone. Couples the redox reaction to proton translocation, and thus conserves the redox energy in a proton gradient. The polypeptide is NAD(P)H-quinone oxidoreductase subunit I, chloroplastic (Acanthospermum australe (Paraguayan starburr)).